We begin with the raw amino-acid sequence, 248 residues long: tRNA (guanine-N(1)-)-methyltransferase (248 aa).

S-adenosyl-L-methionine is bound by residues G113 and 133–138 (IGDYVL). The disordered stretch occupies residues 227–248 (RPAQTIRAKGESQKTPKNKTDG). A compositionally biased stretch (basic and acidic residues) spans 234-248 (AKGESQKTPKNKTDG).

Belongs to the RNA methyltransferase TrmD family. In terms of assembly, homodimer.

Its subcellular location is the cytoplasm. It catalyses the reaction guanosine(37) in tRNA + S-adenosyl-L-methionine = N(1)-methylguanosine(37) in tRNA + S-adenosyl-L-homocysteine + H(+). In terms of biological role, specifically methylates guanosine-37 in various tRNAs. The sequence is that of tRNA (guanine-N(1)-)-methyltransferase from Rhodopseudomonas palustris (strain TIE-1).